The chain runs to 563 residues: Proton channel OTOP2 (563 aa).

Positions 1-20 (MSEELVPHPNESLPGPRASP) are disordered. 12 consecutive transmembrane segments (helical) span residues 30–50 (LLSVLLAVNVLLLACTLISGG), 62–82 (VFALLTTMMLLAALWIVFYLL), 100–120 (PIWLRGGLVLFGICTLVMDVF), 137–157 (ILHPIIQAVFVIVQTYFLWIS), 173–193 (LMFTLATNLAIWMAAVVDESV), 242–262 (FYLYPFNIEYSLFASTMLYVM), 290–310 (FFAGPVLGLLLFVVGLAVFIL), 325–345 (ALVIYYSFNIVCLGLMTLVSL), 373–393 (LMGAALGQYAISYYSIVAVVV), 403–423 (LNLSHALLMIAQHTFQNVFII), 496–516 (DISLFLLLCNVILWIMPAFGA), and 528–548 (FYGYSLWAAIVNICLPFGIFY).

Belongs to the otopetrin family. As to expression, expressed at higher level in stomach, testis and olfactory bulb.

Its subcellular location is the cell membrane. The catalysed reaction is H(+)(in) = H(+)(out). Its activity is regulated as follows. Actives at neutral and alkaline extracellular pH, acid extracellular pH appears to inhibit the channel. Insensitive to activation by Zn(2+). In terms of biological role, proton-selective ion channel open at neutral pH. Actives at neutral and alkaline extracellular pH, likely participates in some alkali-related physiological activities. The sequence is that of Proton channel OTOP2 from Mus musculus (Mouse).